The chain runs to 253 residues: PAXIP1-associated glutamate-rich protein 1 (253 aa).

Disordered regions lie at residues 1-109 (MSLV…MPPP) and 128-253 (QAEI…QRKY). Positions 51–62 (EGGREEAEHEGS) are enriched in basic and acidic residues. The interval 116 to 160 (YELLAAHGTLELQAEILPRRPPTPEAQSEEERSDEEPEAKEEEEE) is sufficient for interaction with NCOA1. Position 138 is a phosphothreonine (Thr138). Positions 142–159 (QSEEERSDEEPEAKEEEE) are enriched in acidic residues. Residues Ser143 and Ser148 each carry the phosphoserine modification. Residues 161 to 253 (KPHMPTEFDF…GSLFPRQRKY (93 aa)) form a sufficient for interaction with ESR1 region. Positions 195-223 (QKREARLDKVLSDMKRHKKLEEQILRTGR) are enriched in basic and acidic residues. Ser237 carries the post-translational modification Phosphoserine.

As to quaternary structure, component of the KMT2 family MLL2/MLL3 complex, at least composed of the histone methyltransferases KMT2D and/or KMT2C, the common complex subunits ASH2L, RBBP5, WDR5 and DPY30, and the complex type-specific subunits PAXIP1/PTIP, PAGR1, NCOA6 and KDM6A; PAXIP1 is required for the association with the MLL2/MLL3 complex. Forms a constitutive complex with PAXIP1/PTIP independently of the MLL2/MLL3 complex. Interacts with NCOA1, ESR1, NR3C1, AR.

The protein resides in the nucleus. Its association with the histone methyltransferase MLL2/MLL3 complex is suggesting a role in epigenetic transcriptional activation. However, in association with PAXIP1/PTIP is proposed to function at least in part independently of the MLL2/MLL3 complex. Proposed to be recruited by PAXIP1 to sites of DNA damage where the PAGR1:PAXIP1 complex is required for cell survival in response to DNA damage independently of the MLL2/MLL3 complex. However, its function in DNA damage has been questioned. During immunoglobulin class switching in activated B-cells is involved in transcription regulation of downstream switch regions at the immunoglobulin heavy-chain (Igh) locus independently of the MLL2/MLL3 complex. Involved in both estrogen receptor-regulated gene transcription and estrogen-stimulated G1/S cell-cycle transition. Acts as a transcriptional cofactor for nuclear hormone receptors. Inhibits the induction properties of several steroid receptors such as NR3C1, AR and PPARG; the mechanism of inhibition appears to be gene-dependent. This Bos taurus (Bovine) protein is PAXIP1-associated glutamate-rich protein 1 (PAGR1).